The sequence spans 158 residues: N5-carboxyaminoimidazole ribonucleotide mutase (158 aa).

Substrate-binding residues include S10, D13, and R40.

This sequence belongs to the AIR carboxylase family. Class I subfamily.

The catalysed reaction is 5-carboxyamino-1-(5-phospho-D-ribosyl)imidazole + H(+) = 5-amino-1-(5-phospho-D-ribosyl)imidazole-4-carboxylate. It participates in purine metabolism; IMP biosynthesis via de novo pathway; 5-amino-1-(5-phospho-D-ribosyl)imidazole-4-carboxylate from 5-amino-1-(5-phospho-D-ribosyl)imidazole (N5-CAIR route): step 2/2. In terms of biological role, catalyzes the conversion of N5-carboxyaminoimidazole ribonucleotide (N5-CAIR) to 4-carboxy-5-aminoimidazole ribonucleotide (CAIR). This is N5-carboxyaminoimidazole ribonucleotide mutase from Saccharolobus solfataricus (strain ATCC 35092 / DSM 1617 / JCM 11322 / P2) (Sulfolobus solfataricus).